A 697-amino-acid polypeptide reads, in one-letter code: Elongation factor G (697 aa).

In terms of domain architecture, tr-type G spans 10 to 285 (AKTRNIGIMA…GVIDYLPSPL (276 aa)). Residues 19-26 (AHIDAGKT), 83-87 (DTPGH), and 137-140 (NKMD) contribute to the GTP site.

The protein belongs to the TRAFAC class translation factor GTPase superfamily. Classic translation factor GTPase family. EF-G/EF-2 subfamily.

It localises to the cytoplasm. Functionally, catalyzes the GTP-dependent ribosomal translocation step during translation elongation. During this step, the ribosome changes from the pre-translocational (PRE) to the post-translocational (POST) state as the newly formed A-site-bound peptidyl-tRNA and P-site-bound deacylated tRNA move to the P and E sites, respectively. Catalyzes the coordinated movement of the two tRNA molecules, the mRNA and conformational changes in the ribosome. The sequence is that of Elongation factor G from Lactobacillus acidophilus (strain ATCC 700396 / NCK56 / N2 / NCFM).